Consider the following 561-residue polypeptide: Phosphatidylinositol 4-kinase gamma 1 (561 aa).

Positions 121–416 (GAQPLLLPSG…SVFGKTSEDS (296 aa)) constitute a PI3K/PI4K catalytic domain. A G-loop region spans residues 127 to 133 (LPSGMGG). ATP-binding positions include 128-134 (PSGMGGA), K149, and 233-236 (QRFV). The segment at 266–274 (LNLDRHAGN) is catalytic loop. Residues 296 to 322 (PIDHGLCLPECLDDPYFEWLNWPQALV) are activation loop. D298 provides a ligand contact to ATP. A disordered region spans residues 456 to 520 (PPLVPRGPRA…PISPNHDESK (65 aa)). Over residues 467–484 (TIPNDVTASMSSSQNQRI) the composition is skewed to polar residues.

Belongs to the PI3/PI4-kinase family. Type II PI4K subfamily.

The enzyme catalyses a 1,2-diacyl-sn-glycero-3-phospho-(1D-myo-inositol) + ATP = a 1,2-diacyl-sn-glycero-3-phospho-(1D-myo-inositol 4-phosphate) + ADP + H(+). Functionally, the phosphorylation of phosphatidylinositol (PI) to PI4P is the first committed step in the generation of phosphatidylinositol 4,5-bisphosphate (PIP2), a precursor of the second messenger inositol 1,4,5-trisphosphate (InsP3). The chain is Phosphatidylinositol 4-kinase gamma 1 (PI4KG1) from Arabidopsis thaliana (Mouse-ear cress).